A 126-amino-acid polypeptide reads, in one-letter code: MSVPTLSNKPENVDLLVLPHGEEKVKCQISDKGDCNIFTIKLEDHTIGNLIKQSLCQDPKVTFAAYRQPHPLQNAIEITIRPKGYAGVKLLSDNVHSILNQVSTLRETFANRVQKYKEKNAYHGNR.

This sequence belongs to the archaeal Rpo11/eukaryotic RPB11/RPC19 RNA polymerase subunit family. As to quaternary structure, component of the RNA polymerase II (Pol II) complex consisting of 12 subunits.

The protein localises to the nucleus. In terms of biological role, DNA-dependent RNA polymerase catalyzes the transcription of DNA into RNA using the four ribonucleoside triphosphates as substrates. Component of RNA polymerase II which synthesizes mRNA precursors and many functional non-coding RNAs. Pol II is the central component of the basal RNA polymerase II transcription machinery. It is composed of mobile elements that move relative to each other. RPB11 is part of the core element with the central large cleft. This is Probable DNA-directed RNA polymerase II subunit RPB11 from Plasmodium chabaudi chabaudi.